Consider the following 483-residue polypeptide: MLDNRPIPADPNEWRCEDVGNWLKKIGMAKYADLIAMKHKVDGKCLLALTDTDLKDPPVSINCLGDIKKILFAIEFLSQKVVEIGNSGVHHRSTPNGNGPSLKNSKDGLLVEYNEQNHLSISGEDVYTTTRRAEIVEDEETLLDTLAKSSDGTSTVQLISREEIIRQVERPDTYFKSVAKLLIAFAYSSLSFLMTSFVMVLVHDRVPDTKTYPPLPDIVLDNVPHIPWAFDMCETIGLVLAVVWFTVLFFHNQRVIVARRMFSLLGTVFLLRCFTMLITSLSVPGIHLQCEARPNTTMQEKLHKAFHIWSNLGMSLHGVRSCGDYMFSGHTTVITMISHFITEYTPADWTGLHTFTWVLNCFAIFLILAAHEHYSIDVFIAFYISSRMFLYYHAYAYNHAGITATDYRMRTWFPLGWFFEYGSQGKVENEFSLPINIRIPRRVFFAKSEEPKITPKSDSSRKRSSVVAAKQNGNSKNHTKKHN.

Transmembrane regions (helical) follow at residues 182–202 (LIAF…MVLV), 230–250 (FDMC…VLFF), and 261–281 (MFSL…ITSL). Residue histidine 330 is part of the active site. Residues 349-369 (WTGLHTFTWVLNCFAIFLILA) form a helical membrane-spanning segment. Catalysis depends on residues histidine 373 and aspartate 377. The chain crosses the membrane as a helical span at residues 376–396 (IDVFIAFYISSRMFLYYHAYA). Over 397 to 483 (YNHAGITATD…NSKNHTKKHN (87 aa)) the chain is Cytoplasmic. Residues 450–461 (EPKITPKSDSSR) are compositionally biased toward basic and acidic residues. The tract at residues 450–483 (EPKITPKSDSSRKRSSVVAAKQNGNSKNHTKKHN) is disordered.

Belongs to the sphingomyelin synthase family.

It is found in the membrane. This Caenorhabditis elegans protein is Sphingomyelin synthase-related 1.